We begin with the raw amino-acid sequence, 120 residues long: Small ribosomal subunit protein uS10 (120 aa).

Serine 16 and serine 18 each carry phosphoserine.

This sequence belongs to the universal ribosomal protein uS10 family. In terms of tissue distribution, expressed ubiquitously in embryos, highest expression is in the midgut.

The sequence is that of Small ribosomal subunit protein uS10 (RpS20) from Drosophila melanogaster (Fruit fly).